An 858-amino-acid chain; its full sequence is Leucine--tRNA ligase (858 aa).

Residues 43 to 54 (PYPSGDGLHVGH) carry the 'HIGH' region motif. The 'KMSKS' region motif lies at 629-633 (KMSKS). K632 contacts ATP.

Belongs to the class-I aminoacyl-tRNA synthetase family.

The protein localises to the cytoplasm. The catalysed reaction is tRNA(Leu) + L-leucine + ATP = L-leucyl-tRNA(Leu) + AMP + diphosphate. In Treponema denticola (strain ATCC 35405 / DSM 14222 / CIP 103919 / JCM 8153 / KCTC 15104), this protein is Leucine--tRNA ligase.